The primary structure comprises 233 residues: Superoxide dismutase [Mn] 3.4, mitochondrial (233 aa).

Residues 1–29 (MALRTLASKNALSFALGGAARPSAASARG) constitute a mitochondrion transit peptide. Residues His-57, His-105, Asp-194, and His-198 each coordinate Mn(2+).

This sequence belongs to the iron/manganese superoxide dismutase family. As to quaternary structure, homotetramer. Mn(2+) serves as cofactor.

Its subcellular location is the mitochondrion matrix. The enzyme catalyses 2 superoxide + 2 H(+) = H2O2 + O2. In terms of biological role, destroys superoxide anion radicals which are normally produced within the cells and which are toxic to biological systems. The protein is Superoxide dismutase [Mn] 3.4, mitochondrial (SODA.3) of Zea mays (Maize).